A 367-amino-acid polypeptide reads, in one-letter code: Pectate lyase 1 (367 aa).

The first 21 residues, 1 to 21, serve as a signal peptide directing secretion; the sequence is MASPCLIAVLVFLCAIVSCYS. A disulfide bridge links cysteine 28 with cysteine 45. Residues 38–305 are beta-helix; sequence NRMKLADCAV…YKKEVTKRIG (268 aa). The segment at 92 to 104 is igE-binding. Binds to IgE in 5 out of 7 patients tested; the sequence is IFSQNMNIKLKMP. A disulfide bond links cysteine 128 and cysteine 147. The N-linked (GlcNAc...) asparagine glycan is linked to asparagine 148. Position 170 (aspartate 170) interacts with Ca(2+). The N-linked (GlcNAc...) asparagine glycan is linked to asparagine 178. The Ca(2+) site is built by aspartate 194 and aspartate 198. The segment at 239–250 is igE-binding. Binds to IgE in 6 out of 7 patients tested; the sequence is AFNQFGPNAGQR. Arginine 250 is a catalytic residue. Positions 251 to 258 are igE-binding. Binds to IgE in 5 out of 7 patients tested; sequence MPRARYGL. The cysteines at positions 306 and 312 are disulfide-linked. The tract at residues 317–327 is igE-binding. Binds to IgE in 3 out of 7 patients tested; it reads WRSTRDAFING.

It belongs to the polysaccharide lyase 1 family. Amb a subfamily. Requires Ca(2+) as cofactor. In terms of processing, N-glycosylated; consists of complex-type N-glycans containing the Lewis a antigen (Galbeta1-3(Fucalpha1-4)GlcNAcbeta1-). Expressed in pollen (at protein level).

The catalysed reaction is Eliminative cleavage of (1-&gt;4)-alpha-D-galacturonan to give oligosaccharides with 4-deoxy-alpha-D-galact-4-enuronosyl groups at their non-reducing ends.. Its pathway is glycan metabolism; pectin degradation; 2-dehydro-3-deoxy-D-gluconate from pectin: step 2/5. Functionally, has low pectate lyase activity. This is Pectate lyase 1 from Juniperus ashei (Ozark white cedar).